We begin with the raw amino-acid sequence, 274 residues long: Cytochrome b-c1 complex subunit Rieske, mitochondrial (274 aa).

The Mitochondrial matrix portion of the chain corresponds to 79 to 103; that stretch reads SHTDVKVPDFYDYRRLEVLDSTKSS. A helical transmembrane segment spans residues 104–140; that stretch reads RESSEARKGFSYLVTAVTTVGVAYAAKNAVTQFISSM. At 141-274 the chain is on the mitochondrial intermembrane side; it reads SASADVLAMA…FTSDDMVVVG (134 aa). The region spanning 187–272 is the Rieske domain; that stretch reads EAAVELSQLR…YEFTSDDMVV (86 aa). [2Fe-2S] cluster contacts are provided by C217, H219, C236, H239, and S241. An intrachain disulfide couples C222 to C238.

This sequence belongs to the Rieske iron-sulfur protein family. In terms of assembly, component of the ubiquinol-cytochrome c oxidoreductase (cytochrome b-c1 complex, complex III, CIII), a multisubunit enzyme composed of 11 subunits. The complex is composed of 3 respiratory subunits cytochrome b, cytochrome c1 and Rieske protein UQCRFS1, 2 core protein subunits UQCRC1/QCR1 and UQCRC2/QCR2, and 6 low-molecular weight protein subunits UQCRH/QCR6, UQCRB/QCR7, UQCRQ/QCR8, UQCR10/QCR9, UQCR11/QCR10 and subunit 9, the cleavage product of Rieske protein UQCRFS1. The complex exists as an obligatory dimer and forms supercomplexes (SCs) in the inner mitochondrial membrane with NADH-ubiquinone oxidoreductase (complex I, CI) and cytochrome c oxidase (complex IV, CIV), resulting in different assemblies (supercomplex SCI(1)III(2)IV(1) and megacomplex MCI(2)III(2)IV(2)). Incorporation of the Rieske protein UQCRFS1 is the penultimate step in complex III assembly. Interacts with TTC19, which is involved in the clearance of UQCRFS1 fragments. Component of the ubiquinol-cytochrome c oxidoreductase (cytochrome b-c1 complex, complex III, CIII). Subunit 9 corresponds to the mitochondrial targeting sequence (MTS) of Rieske protein UQCRFS1. It is retained after processing and incorporated inside complex III, where it remains bound to the complex and localizes between the 2 core subunits UQCRC1/QCR1 and UQCRC2/QCR2. Requires [2Fe-2S] cluster as cofactor. Proteolytic processing is necessary for the correct insertion of UQCRFS1 in the complex III dimer. Several fragments are generated during UQCRFS1 insertion, most probably due to the endogenous matrix-processing peptidase (MPP) activity of the 2 core protein subunits UQCRC1/QCR1 and UQCRC2/QCR2, which are homologous to the 2 mitochondrial-processing peptidase (MPP) subunits beta-MPP and alpha-MPP respectively. The action of the protease is also necessary for the clearance of the UQCRFS1 fragments.

The protein resides in the mitochondrion inner membrane. It carries out the reaction a quinol + 2 Fe(III)-[cytochrome c](out) = a quinone + 2 Fe(II)-[cytochrome c](out) + 2 H(+)(out). Component of the ubiquinol-cytochrome c oxidoreductase, a multisubunit transmembrane complex that is part of the mitochondrial electron transport chain which drives oxidative phosphorylation. The respiratory chain contains 3 multisubunit complexes succinate dehydrogenase (complex II, CII), ubiquinol-cytochrome c oxidoreductase (cytochrome b-c1 complex, complex III, CIII) and cytochrome c oxidase (complex IV, CIV), that cooperate to transfer electrons derived from NADH and succinate to molecular oxygen, creating an electrochemical gradient over the inner membrane that drives transmembrane transport and the ATP synthase. The cytochrome b-c1 complex catalyzes electron transfer from ubiquinol to cytochrome c, linking this redox reaction to translocation of protons across the mitochondrial inner membrane, with protons being carried across the membrane as hydrogens on the quinol. In the process called Q cycle, 2 protons are consumed from the matrix, 4 protons are released into the intermembrane space and 2 electrons are passed to cytochrome c. The Rieske protein is a catalytic core subunit containing a [2Fe-2S] iron-sulfur cluster. It cycles between 2 conformational states during catalysis to transfer electrons from the quinol bound in the Q(0) site in cytochrome b to cytochrome c1. Incorporation of UQCRFS1 is the penultimate step in complex III assembly. Functionally, component of the ubiquinol-cytochrome c oxidoreductase (cytochrome b-c1 complex, complex III, CIII). UQCRFS1 undergoes proteolytic processing once it is incorporated in the complex III dimer. One of the fragments, called subunit 9, corresponds to its mitochondrial targeting sequence (MTS). The proteolytic processing is necessary for the correct insertion of UQCRFS1 in the complex III dimer, but the persistence of UQCRFS1-derived fragments may prevent newly imported UQCRFS1 to be processed and assembled into complex III and is detrimental for the complex III structure and function. The polypeptide is Cytochrome b-c1 complex subunit Rieske, mitochondrial (UQCRFS1) (Theropithecus gelada (Gelada baboon)).